The primary structure comprises 656 residues: uncharacterized protein (656 aa).

A run of 3 helical transmembrane segments spans residues 7–27 (QQVL…LNHL), 40–60 (LMAM…FWTL), and 210–230 (AVFI…AFTI). The HAMP domain occupies 231-280 (TRPIRELLTGVKNIASGDFYQRIDLPFGGELGALIFNFNEMAERLEKYEQ). The region spanning 289 to 359 (EKAKLETLVS…PILNDIIRKN (71 aa)) is the PAS domain. The region spanning 424–654 (NVSHELRTPL…CFFFDLMIAK (231 aa)) is the Histidine kinase domain. His427 carries the post-translational modification Phosphohistidine; by autocatalysis.

It localises to the plastid. The protein resides in the chloroplast membrane. It catalyses the reaction ATP + protein L-histidine = ADP + protein N-phospho-L-histidine.. This is an uncharacterized protein from Porphyra purpurea (Red seaweed).